A 142-amino-acid polypeptide reads, in one-letter code: ATP synthase epsilon chain (142 aa).

This sequence belongs to the ATPase epsilon chain family. In terms of assembly, F-type ATPases have 2 components, CF(1) - the catalytic core - and CF(0) - the membrane proton channel. CF(1) has five subunits: alpha(3), beta(3), gamma(1), delta(1), epsilon(1). CF(0) has three main subunits: a, b and c.

The protein resides in the cell inner membrane. In terms of biological role, produces ATP from ADP in the presence of a proton gradient across the membrane. The chain is ATP synthase epsilon chain from Shewanella frigidimarina (strain NCIMB 400).